We begin with the raw amino-acid sequence, 261 residues long: Enolase-phosphatase E1 (261 aa).

Residues aspartate 16 and glutamate 18 each coordinate Mg(2+). Residues 153 to 154 (SS) and lysine 187 each bind substrate. Mg(2+) is bound at residue aspartate 212.

This sequence belongs to the HAD-like hydrolase superfamily. MasA/MtnC family. Monomer. Requires Mg(2+) as cofactor.

Its subcellular location is the cytoplasm. It is found in the nucleus. It carries out the reaction 5-methylsulfanyl-2,3-dioxopentyl phosphate + H2O = 1,2-dihydroxy-5-(methylsulfanyl)pent-1-en-3-one + phosphate. It functions in the pathway amino-acid biosynthesis; L-methionine biosynthesis via salvage pathway; L-methionine from S-methyl-5-thio-alpha-D-ribose 1-phosphate: step 3/6. Its pathway is amino-acid biosynthesis; L-methionine biosynthesis via salvage pathway; L-methionine from S-methyl-5-thio-alpha-D-ribose 1-phosphate: step 4/6. Its function is as follows. Bifunctional enzyme that catalyzes the enolization of 2,3-diketo-5-methylthiopentyl-1-phosphate (DK-MTP-1-P) into the intermediate 2-hydroxy-3-keto-5-methylthiopentenyl-1-phosphate (HK-MTPenyl-1-P), which is then dephosphorylated to form the acireductone 1,2-dihydroxy-3-keto-5-methylthiopentene (DHK-MTPene). In Salmo salar (Atlantic salmon), this protein is Enolase-phosphatase E1 (enoph1).